The following is a 373-amino-acid chain: Probable leucine aminopeptidase 1 (373 aa).

The first 18 residues, 1–18 (MKLLSVLALSATATSVLG), serve as a signal peptide directing secretion. Residues His176 and Asp195 each contribute to the Zn(2+) site. N-linked (GlcNAc...) asparagine glycosylation occurs at Asn196. Residues Glu234 and Asp261 each contribute to the Zn(2+) site. Asn288 carries N-linked (GlcNAc...) asparagine glycosylation. A disulfide bridge connects residues Cys310 and Cys314. His343 is a Zn(2+) binding site.

This sequence belongs to the peptidase M28 family. M28E subfamily. Monomer. Zn(2+) serves as cofactor.

It localises to the secreted. Extracellular aminopeptidase which contributes to pathogenicity. The protein is Probable leucine aminopeptidase 1 (LAP1) of Trichophyton verrucosum (strain HKI 0517).